A 199-amino-acid polypeptide reads, in one-letter code: NAD(P)H dehydrogenase (quinone) (199 aa).

A Flavodoxin-like domain is found at 4–190; it reads VLVLYYSAYG…NGARYQGRTI (187 aa). FMN is bound by residues 10 to 15 and 78 to 80; these read SAYGHI and TRF. Y12 contributes to the NAD(+) binding site. Position 98 (W98) interacts with substrate. Residues 113–119 and H134 each bind FMN; that span reads STATQHG.

This sequence belongs to the WrbA family. It depends on FMN as a cofactor.

It catalyses the reaction a quinone + NADH + H(+) = a quinol + NAD(+). It carries out the reaction a quinone + NADPH + H(+) = a quinol + NADP(+). The sequence is that of NAD(P)H dehydrogenase (quinone) from Afipia carboxidovorans (strain ATCC 49405 / DSM 1227 / KCTC 32145 / OM5) (Oligotropha carboxidovorans).